A 257-amino-acid polypeptide reads, in one-letter code: Myosin-8 (257 aa).

A coiled-coil region spans residues 1-257 (RAALQAEIEE…REVHTKISAE (257 aa)). Phosphoserine is present on residues serine 33, serine 45, and serine 58.

In terms of assembly, muscle myosin is a hexameric protein that consists of 2 heavy chain subunits (MHC), 2 alkali light chain subunits (MLC) and 2 regulatory light chain subunits (MLC-2).

The protein localises to the cytoplasm. The protein resides in the myofibril. In terms of biological role, muscle contraction. This Rattus norvegicus (Rat) protein is Myosin-8 (Myh8).